Consider the following 1129-residue polypeptide: Eukaryotic translation initiation factor 3 subunit A (1129 aa).

One can recognise a PCI domain in the interval 319–502 (LQRMAAHVLL…NSIYFGTDLT (184 aa)). Disordered stretches follow at residues 590-633 (NNAR…NEIQ) and 836-1129 (AAEA…VKRR). Basic and acidic residues-rich tracts occupy residues 836-903 (AAEA…RSER), 923-964 (DRND…KDTD), 971-985 (WRVR…RERG), 994-1044 (GRDD…DQPQ), and 1053-1076 (DSPR…RDIR). Residues 1080–1091 (PKEGGGGGGGGN) show a composition bias toward gly residues. A compositionally biased stretch (basic and acidic residues) spans 1098–1119 (PRDEKPPVKRDQPQDKENKAGD).

The protein belongs to the eIF-3 subunit A family. As to quaternary structure, component of the eukaryotic translation initiation factor 3 (eIF-3) complex. The eIF-3 complex interacts with pix.

It localises to the cytoplasm. In terms of biological role, RNA-binding component of the eukaryotic translation initiation factor 3 (eIF-3) complex, which is involved in protein synthesis of a specialized repertoire of mRNAs and, together with other initiation factors, stimulates binding of mRNA and methionyl-tRNAi to the 40S ribosome. The eIF-3 complex specifically targets and initiates translation of a subset of mRNAs involved in cell proliferation. This is Eukaryotic translation initiation factor 3 subunit A from Drosophila mojavensis (Fruit fly).